We begin with the raw amino-acid sequence, 135 residues long: Envelope glycoprotein N (135 aa).

An N-terminal signal peptide occupies residues 1–19 (MEWNTLVLGLLVLSVVASS). Residues 20–98 (NNTSTASTPR…SHMYELSLSS (79 aa)) lie on the Virion surface side of the membrane. Residues 21–68 (NTSTASTPRPSSSTHASTTVKATTVATTSTTTATSTSSTTSAKPGSTT) show a composition bias toward low complexity. Residues 21 to 73 (NTSTASTPRPSSSTHASTTVKATTVATTSTTTATSTSSTTSAKPGSTTHDPNV) are disordered. Residues 99-119 (FAAWWTMLNALILMGAFCIVL) traverse the membrane as a helical segment. Residues 120-135 (RHCCFQNFTATTTKGY) are Intravirion-facing.

Belongs to the herpesviridae glycoprotein N family. Interacts (via N-terminus) with gM (via N-terminus). The gM-gN heterodimer forms the gCII complex. In terms of processing, O-glycosylated.

The protein resides in the virion membrane. It is found in the host membrane. Its subcellular location is the host Golgi apparatus. It localises to the host trans-Golgi network. In terms of biological role, envelope glycoprotein necessary for proper maturation of gM and modulation of its membrane fusion activity. Also plays a critical role in virion morphogenesis. The chain is Envelope glycoprotein N from Homo sapiens (Human).